A 154-amino-acid chain; its full sequence is MGRFIFVSFGLLVVFLSLSGTGADFFCPSGWGSNNGHCYQAFNQRMTWEDAERFCSAQAKGGHLVSIETRAEADFVAHVVAERIETSFPHVWIGLRDEGKEQQCSSEWSDGSSVSYENWIEAESKTCLGLELDSNYHKWVNVYCGQRNPFVCEA.

An N-terminal signal peptide occupies residues 1–23 (MGRFIFVSFGLLVVFLSLSGTGA). Disulfide bonds link Cys-27–Cys-38, Cys-55–Cys-152, and Cys-127–Cys-144. Positions 34-153 (NNGHCYQAFN…CGQRNPFVCE (120 aa)) constitute a C-type lectin domain. Ca(2+)-binding residues include Ser-66, Glu-68, and Glu-72. Residue Glu-153 participates in Ca(2+) binding.

It belongs to the snaclec family. In terms of assembly, heterodimer of subunits A and B; disulfide-linked. In terms of tissue distribution, expressed by the venom gland.

The protein resides in the secreted. Its function is as follows. Inhibits thrombin-induced fibrinogen clotting and factor Xa-induced prothrombin activation. Binds to thrombin and prothrombin exosites. The polypeptide is Snaclec salmorin subunit A (Gloydius brevicauda (Korean slamosa snake)).